Consider the following 567-residue polypeptide: Laccase-3 (567 aa).

The N-terminal stretch at 1 to 24 (MASSSSSRLLFLLSCSVLALLAGA) is a signal peptide. 2 consecutive Plastocyanin-like domains span residues 32 to 148 (IVQE…PREN) and 158 to 310 (REVP…YDCG). A glycan (N-linked (GlcNAc...) asparagine) is linked at N78. Cu cation is bound by residues H82, H84, H127, and H129. N-linked (GlcNAc...) asparagine glycans are attached at residues N148, N187, N203, N298, N330, N379, and N389. In terms of domain architecture, Plastocyanin-like 3 spans 415-551 (DFPAYPPVQF…AMAFLVEDGY (137 aa)). Cu cation is bound by residues H468, H471, H473, H530, C531, H532, and H536.

Belongs to the multicopper oxidase family. Cu cation serves as cofactor.

The protein resides in the secreted. It localises to the extracellular space. The protein localises to the apoplast. The catalysed reaction is 4 hydroquinone + O2 = 4 benzosemiquinone + 2 H2O. Its function is as follows. Lignin degradation and detoxification of lignin-derived products. This is Laccase-3 (LAC3) from Oryza sativa subsp. japonica (Rice).